Consider the following 23-residue polypeptide: Cytochrome c3-1 (23 aa).

A disordered region spans residues 1-23 (AAPKAPADGLKMDKTKQXVVFNH). H23 contributes to the heme binding site.

Binds 4 heme groups per subunit.

It is found in the periplasm. Participates in sulfate respiration coupled with phosphorylation by transferring electrons from the enzyme dehydrogenase to ferredoxin. The chain is Cytochrome c3-1 from Nitratidesulfovibrio vulgaris (Desulfovibrio vulgaris).